A 254-amino-acid chain; its full sequence is MIDIHCHILPAMDDGAGDSADSIEMARAAVRQGIRTIIATPHHNNGVYKNEPAAVREAADQLNKRLIKEDIPLHVLPGQEIRIYGEVEQDLAKRQLLSLNDTKYILIEFPFDHVPRYAEQLFYDLQLKGYIPVIAHPERNREIRENPSLLYHLVEKGAASQITSGSLAGIFGKQLKAFSLRLVEANLIHFVASDAHNVKTRNFHTQEALYVLEKEFGSELPYMLTENAELLLRNQTIFRQPPQPVKRRKLFGFF.

Belongs to the metallo-dependent hydrolases superfamily. CpsB/CapC family. The cofactor is Mn(2+).

The catalysed reaction is O-phospho-L-tyrosyl-[protein] + H2O = L-tyrosyl-[protein] + phosphate. With respect to regulation, inhibited by vanadate and sodium pyrophosphate. Not inhibited by sodium fluoride. In terms of biological role, dephosphorylates the phosphotyrosine-containing proteins YwqD, YwqF and Ssb. The protein is Tyrosine-protein phosphatase YwqE (ywqE) of Bacillus subtilis (strain 168).